Reading from the N-terminus, the 414-residue chain is Probable isoprenylcysteine alpha-carbonyl methylesterase ICME (414 aa).

The segment at Met-1–Thr-54 is disordered. The next 2 membrane-spanning stretches (helical) occupy residues Leu-90–Tyr-110 and Val-145–Leu-165. Residues Gly-151–Ala-153 and Gln-222–Ala-224 contribute to the substrate site. Residues Ser-223, Asp-323, and His-355 contribute to the active site.

It belongs to the AB hydrolase superfamily. Isoprenylcysteine methylesterase family.

The protein resides in the endoplasmic reticulum membrane. The protein localises to the golgi apparatus membrane. The enzyme catalyses [protein]-C-terminal S-[(2E,6E)-farnesyl]-L-cysteine methyl ester + H2O = [protein]-C-terminal S-[(2E,6E)-farnesyl]-L-cysteine + methanol + H(+). Its function is as follows. Catalyzes the demethylation of isoprenylcysteine methylesters. This chain is Probable isoprenylcysteine alpha-carbonyl methylesterase ICME (IMCE), found in Oryza sativa subsp. japonica (Rice).